We begin with the raw amino-acid sequence, 314 residues long: Protein phosphatase PTC7 homolog fig (314 aa).

The 267-residue stretch at 43 to 309 (PYLVTVVQGR…DDITLILSSV (267 aa)) folds into the PPM-type phosphatase domain. Residues Asp-87, Gly-88, and Asp-232 each contribute to the Mn(2+) site.

This sequence belongs to the PP2C family. The cofactor is Mg(2+). Mn(2+) serves as cofactor.

The catalysed reaction is O-phospho-L-seryl-[protein] + H2O = L-seryl-[protein] + phosphate. The enzyme catalyses O-phospho-L-threonyl-[protein] + H2O = L-threonyl-[protein] + phosphate. The polypeptide is Protein phosphatase PTC7 homolog fig (Drosophila sechellia (Fruit fly)).